The chain runs to 136 residues: Transmembrane protein 203 (136 aa).

Residues 1–51 (MLFSLRELVQWLGFATFEIFVHLLALLVFSVLLALRVDGLVPGLSWWNVFV) are interaction with STING1. Transmembrane regions (helical) follow at residues 14–34 (FATF…VLLA), 50–72 (FVPF…VRLF), 81–101 (VLRL…EMLL), and 112–132 (LWFG…MIRA). The interval 52–136 (PFFAADGLST…LLMIRACRVN (85 aa)) is required for the lysosomal localization of the STING-TMEM203 complex.

Homodimer. Interacts with ATP2A2, ITPR3 and STIM1. Interacts with STING1 (via transmembrane domain). As to expression, increased expression seen in T-lymphocytes from patients with systemic lupus erythematosus (SLE).

The protein localises to the endoplasmic reticulum membrane. It localises to the endoplasmic reticulum-Golgi intermediate compartment. It is found in the lysosome membrane. Involved in the regulation of cellular calcium homeotasis. Required for spermatogenesis. Acts as a regulator of STING-mediated inflammatory signaling in macrophages. Forms a complex with STING, promoting the activity of TBK1 kinase and the transcription factor IRF3, leading to activation of type I interferon expression. The sequence is that of Transmembrane protein 203 (TMEM203) from Homo sapiens (Human).